Consider the following 465-residue polypeptide: GTPase Der (465 aa).

EngA-type G domains lie at proline 3–serine 167 and isoleucine 179–leucine 352. GTP-binding positions include glycine 9 to serine 16, aspartate 57 to methionine 61, asparagine 119 to aspartate 122, glycine 185 to serine 192, aspartate 232 to leucine 236, and asparagine 297 to aspartate 300. In terms of domain architecture, KH-like spans arginine 353–aspartate 437.

It belongs to the TRAFAC class TrmE-Era-EngA-EngB-Septin-like GTPase superfamily. EngA (Der) GTPase family. In terms of assembly, associates with the 50S ribosomal subunit.

In terms of biological role, GTPase that plays an essential role in the late steps of ribosome biogenesis. The sequence is that of GTPase Der from Xylella fastidiosa (strain M23).